Reading from the N-terminus, the 406-residue chain is Tryptophan 2,3-dioxygenase (406 aa).

S19 is subject to Phosphoserine. Substrate is bound by residues 72 to 76 and R144; that span reads FIITH. H328 serves as a coordination point for heme. A substrate-binding site is contributed by T342.

The protein belongs to the tryptophan 2,3-dioxygenase family. Homotetramer. Dimer of dimers. Heme is required as a cofactor.

The enzyme catalyses L-tryptophan + O2 = N-formyl-L-kynurenine. It functions in the pathway amino-acid degradation; L-tryptophan degradation via kynurenine pathway; L-kynurenine from L-tryptophan: step 1/2. In terms of biological role, heme-dependent dioxygenase that catalyzes the oxidative cleavage of the L-tryptophan (L-Trp) pyrrole ring and converts L-tryptophan to N-formyl-L-kynurenine. Catalyzes the oxidative cleavage of the indole moiety. This is Tryptophan 2,3-dioxygenase from Mus musculus (Mouse).